Here is a 182-residue protein sequence, read N- to C-terminus: Bifunctional protein PyrR (182 aa).

A PRPP-binding motif is present at residues Val97 to Thr109.

It belongs to the purine/pyrimidine phosphoribosyltransferase family. PyrR subfamily.

It catalyses the reaction UMP + diphosphate = 5-phospho-alpha-D-ribose 1-diphosphate + uracil. Its function is as follows. Regulates the transcription of the pyrimidine nucleotide (pyr) operon in response to exogenous pyrimidines. In terms of biological role, also displays a weak uracil phosphoribosyltransferase activity which is not physiologically significant. The protein is Bifunctional protein PyrR of Synechococcus sp. (strain JA-2-3B'a(2-13)) (Cyanobacteria bacterium Yellowstone B-Prime).